The sequence spans 248 residues: 5'-nucleotidase SurE (248 aa).

4 residues coordinate a divalent metal cation: D8, D9, S39, and N91.

This sequence belongs to the SurE nucleotidase family. Requires a divalent metal cation as cofactor.

The protein localises to the cytoplasm. The catalysed reaction is a ribonucleoside 5'-phosphate + H2O = a ribonucleoside + phosphate. Its function is as follows. Nucleotidase that shows phosphatase activity on nucleoside 5'-monophosphates. This is 5'-nucleotidase SurE from Neisseria meningitidis serogroup C / serotype 2a (strain ATCC 700532 / DSM 15464 / FAM18).